The following is a 243-amino-acid chain: Ice-binding protein K3-B1 (243 aa).

A signal peptide spans 1–20; that stretch reads MFSASSLLAVIALAISSVSA.

The protein belongs to the ice-binding protein family.

Functionally, binds to the surface of ice crystals. Has low thermal hysteresis (TH) activity, which is the ability to lower the freezing point of an aqueous solution below its melting point. The TH activity of this protein is approximately 0.3 degrees Celsius at 11 mM. In Typhula ishikariensis (Gray snow mold fungus), this protein is Ice-binding protein K3-B1.